The sequence spans 340 residues: Serpentine receptor class alpha-23 (340 aa).

6 helical membrane-spanning segments follow: residues 34–54 (FISTIVLISYCFSWLAIQALW), 114–136 (YFYYLTNYFSTYSVFSLTFDRLI), 150–170 (FIAISLLVLQFLLAILSFYIA), 199–219 (VRTVVMVSCIIVTGFAYYLSV), 250–270 (ILIVLQFSCTMISSFGVNLLL), and 284–304 (VGAFLPGVAYANLCLPLAIYF).

The protein belongs to the nematode receptor-like protein sra family.

The protein localises to the membrane. This chain is Serpentine receptor class alpha-23 (sra-23), found in Caenorhabditis elegans.